The following is a 427-amino-acid chain: Serine hydroxymethyltransferase (427 aa).

(6S)-5,6,7,8-tetrahydrofolate is bound by residues leucine 122 and 126–128 (GHL). Lysine 231 bears the N6-(pyridoxal phosphate)lysine mark. Residues glutamate 247 and 355–357 (SPF) each bind (6S)-5,6,7,8-tetrahydrofolate.

Belongs to the SHMT family. In terms of assembly, homodimer. Pyridoxal 5'-phosphate serves as cofactor.

Its subcellular location is the cytoplasm. It catalyses the reaction (6R)-5,10-methylene-5,6,7,8-tetrahydrofolate + glycine + H2O = (6S)-5,6,7,8-tetrahydrofolate + L-serine. The protein operates within one-carbon metabolism; tetrahydrofolate interconversion. Its pathway is amino-acid biosynthesis; glycine biosynthesis; glycine from L-serine: step 1/1. In terms of biological role, catalyzes the reversible interconversion of serine and glycine with tetrahydrofolate (THF) serving as the one-carbon carrier. This reaction serves as the major source of one-carbon groups required for the biosynthesis of purines, thymidylate, methionine, and other important biomolecules. Also exhibits THF-independent aldolase activity toward beta-hydroxyamino acids, producing glycine and aldehydes, via a retro-aldol mechanism. This chain is Serine hydroxymethyltransferase, found in Synechocystis sp. (strain ATCC 27184 / PCC 6803 / Kazusa).